The sequence spans 365 residues: Peptide chain release factor 2 (365 aa).

At glutamine 252 the chain carries N5-methylglutamine.

It belongs to the prokaryotic/mitochondrial release factor family. Methylated by PrmC. Methylation increases the termination efficiency of RF2.

It localises to the cytoplasm. Functionally, peptide chain release factor 2 directs the termination of translation in response to the peptide chain termination codons UGA and UAA. This is Peptide chain release factor 2 from Shewanella baltica (strain OS223).